Consider the following 715-residue polypeptide: Solute carrier organic anion transporter family member 1C1 (715 aa).

At 1–43 (MDTSSKENAHLFHKNSAQPAGGPSFTVGYPSTEEARPCCGKLK) the chain is on the cytoplasmic side. A helical membrane pass occupies residues 44 to 63 (VFLGALSFVYFAKALAEGYL). Residues 64–82 (KSTVTQIERRFEIPSSLVG) are Extracellular-facing. Residues 83–103 (IIDGSFEIGNLLVITFVSYFG) traverse the membrane as a helical segment. The Cytoplasmic portion of the chain corresponds to 104–109 (AKLHRP). The chain crosses the membrane as a helical span at residues 110–134 (KIIGAGCLVMGFGTMLIAVPQFFME). The Extracellular portion of the chain corresponds to 135-187 (KYSYEKYERYSPSSNVTPSISPCYLESSSPSPSSILGKSQNKISHECVGDSSS). Residues 188–216 (SMWVYVFLGNLLRGLGETPIQPLGIAYLD) form a helical membrane-spanning segment. Over 217–235 (DFASEDNAAFYIGCVQTVA) the chain is Cytoplasmic. A helical membrane pass occupies residues 236–256 (IIGPIFGFLLGSLCAKLYVDI). The Extracellular segment spans residues 257–274 (GFVNLDHITITPKDPQWV). The helical transmembrane segment at 275 to 299 (GAWWLGYLIAGFLSLLAAVPFWCLP) threads the bilayer. Residues 300-351 (KTLPRSQSRENSGSTSEKSKFIDDPIHYQMAPGDDKMKIMEMAKDFLPSLKT) are Cytoplasmic-facing. The helical transmembrane segment at 352-373 (LFRNPVYILYLCASTVQFNSLF) threads the bilayer. Residues 374–393 (GMVTYKPKYIEQQYGQSSSK) lie on the Extracellular side of the membrane. A helical transmembrane segment spans residues 394 to 417 (ANFVIGLINIPAVALGIFSGGIVM). Residues 418-421 (KKFR) lie on the Cytoplasmic side of the membrane. Residues 422-445 (LGICEATKLYLGSSVFGYLLFLSL) form a helical membrane-spanning segment. Over 446-557 (FALGCENSSV…NGCSQMFLYF (112 aa)) the chain is Extracellular. N-linked (GlcNAc...) asparagine glycosylation is present at Asn452. A Kazal-like domain is found at 473–528 (RALFSDCNSRCKCSDSKWEPMCGDNGITYVSACLAGCQSSSRSGKNIIFSNCTCVG). Disulfide bonds link Cys479/Cys509, Cys485/Cys505, and Cys494/Cys526. Residues Asn523 and Asn536 are each glycosylated (N-linked (GlcNAc...) asparagine). A helical membrane pass occupies residues 558-580 (LVISVITSYTLSLGGIPGYILLL). The Cytoplasmic segment spans residues 581–589 (RCIQPQLKS). A helical membrane pass occupies residues 590 to 615 (FALGIYTLAVRVLAGIPAPVYFGVLI). At 616-649 (DTSCLKWGFKKCGSRGSCRLYDSHAFRHIYLGLT) the chain is on the extracellular side. The chain crosses the membrane as a helical span at residues 650–667 (TLLGTVSVFLSMAVLFVL). Residues 668-715 (KKKYVSKHSSLITTREKIGMSSSIKKETCAARDRGLQPKYWPGKETRL) are Cytoplasmic-facing.

The protein belongs to the organo anion transporter (TC 2.A.60) family. As to expression, widely expressed throughout the brain except in the cerebellum. Not detected in kidney, heart, lung, skeletal muscle, spleen, liver, nor testis. Highly expressed in cerebral microvessels throughout the brain and in the choroid plexus (at mRNA and protein level).

It localises to the cell membrane. The catalysed reaction is 3,3',5'-triiodo-L-thyronine(out) = 3,3',5'-triiodo-L-thyronine(in). The enzyme catalyses L-thyroxine(out) = L-thyroxine(in). It carries out the reaction L-thyroxine sulfate(out) = L-thyroxine sulfate(in). It catalyses the reaction 17beta-estradiol 17-O-(beta-D-glucuronate)(out) = 17beta-estradiol 17-O-(beta-D-glucuronate)(in). The catalysed reaction is 3,3',5-triiodo-L-thyronine(out) = 3,3',5-triiodo-L-thyronine(in). Mediates the Na(+)-independent high affinity transport of thyroid hormones at the plasma membrane of brain capillary endothelial cells. The transport activity of substrates L-thyroxine (T4) and 3,3',5'-triiodo-L-thyronine (reverse T3, rT3) is much greater than that of 3,3',5-triiodo-L-thyronine (T3). The prehormone, T4, is the major form in the circulating blood and is converted to the active form, T3, by the iodothyronine-deiodinase in peripheral organs. T3 plays an essential role in brain development via binding to specific nuclear receptors (thyroid hormone receptor). Also transports organic anions such as the conjugated steroid 17-beta-glucuronosyl estradiol (17beta-estradiol 17-O-(beta-D-glucuronate)). Transports T4 and estrone-3-sulfate in a pH-insensitive manner. May serve as a drug efflux system at the blood brain barrier. The polypeptide is Solute carrier organic anion transporter family member 1C1 (Slco1c1) (Mus musculus (Mouse)).